Here is a 204-residue protein sequence, read N- to C-terminus: Elongation factor Ts (204 aa).

The segment at 87–90 (TDFV) is involved in Mg(2+) ion dislocation from EF-Tu.

It belongs to the EF-Ts family.

Its subcellular location is the cytoplasm. In terms of biological role, associates with the EF-Tu.GDP complex and induces the exchange of GDP to GTP. It remains bound to the aminoacyl-tRNA.EF-Tu.GTP complex up to the GTP hydrolysis stage on the ribosome. The sequence is that of Elongation factor Ts from Frankia casuarinae (strain DSM 45818 / CECT 9043 / HFP020203 / CcI3).